Here is a 108-residue protein sequence, read N- to C-terminus: Iron-sulfur cluster assembly protein CyaY (108 aa).

This sequence belongs to the frataxin family.

In terms of biological role, involved in iron-sulfur (Fe-S) cluster assembly. May act as a regulator of Fe-S biogenesis. This Burkholderia vietnamiensis (strain G4 / LMG 22486) (Burkholderia cepacia (strain R1808)) protein is Iron-sulfur cluster assembly protein CyaY.